The chain runs to 274 residues: Phosphatidylglycerol--prolipoprotein diacylglyceryl transferase (274 aa).

4 helical membrane-spanning segments follow: residues 24 to 44 (WYALAYIVGLLGGWWYTRFLS), 60 to 80 (LLVWATLGTILGGRLGYVVFY), 96 to 116 (WHGGMSFHGGLVGVITATVLF), and 122 to 142 (LSVARVGDLVALVAPLGLFFG). Position 143 (R143) interacts with a 1,2-diacyl-sn-glycero-3-phospho-(1'-sn-glycerol). The next 3 helical transmembrane spans lie at 182 to 202 (ATLEGLVLFCLLGLLWRFTAL), 207 to 227 (GQIIGLFLIGYGLSRITAEFF), and 241 to 261 (VTMGQILSLPMILAGIVVFVV).

It belongs to the Lgt family.

It is found in the cell inner membrane. It carries out the reaction L-cysteinyl-[prolipoprotein] + a 1,2-diacyl-sn-glycero-3-phospho-(1'-sn-glycerol) = an S-1,2-diacyl-sn-glyceryl-L-cysteinyl-[prolipoprotein] + sn-glycerol 1-phosphate + H(+). Its pathway is protein modification; lipoprotein biosynthesis (diacylglyceryl transfer). Its function is as follows. Catalyzes the transfer of the diacylglyceryl group from phosphatidylglycerol to the sulfhydryl group of the N-terminal cysteine of a prolipoprotein, the first step in the formation of mature lipoproteins. The polypeptide is Phosphatidylglycerol--prolipoprotein diacylglyceryl transferase (Rhodospirillum rubrum (strain ATCC 11170 / ATH 1.1.1 / DSM 467 / LMG 4362 / NCIMB 8255 / S1)).